A 307-amino-acid chain; its full sequence is Ras-related protein Rab-33 (307 aa).

The interval 19–80 (VIDPPKHVTA…IPPAPEAVTA (62 aa)) is disordered. Composition is skewed to pro residues over residues 42-56 (PTHP…PAVP) and 65-75 (PTAPPPIPPAP). GTP is bound at residue 107-114 (GNAAVGKT). An Effector region motif is present at residues 129 to 137 (TEATIGVDF). Residues 155–159 (DTAGQ) and 217–220 (NKCD) contribute to the GTP site. Residues Cys-306 and Cys-307 are each lipidated (S-geranylgeranyl cysteine).

It belongs to the small GTPase superfamily. Rab family.

It is found in the cell membrane. This is Ras-related protein Rab-33 (rab-33) from Caenorhabditis elegans.